A 160-amino-acid chain; its full sequence is Large ribosomal subunit protein uL30m (160 aa).

The N-terminal 34 residues, 1–34 (MAGVLRSVFQRPPGRLQTVKKGAESLIGTEWIRH), are a transit peptide targeting the mitochondrion. The tract at residues 45 to 64 (VFQPRPEDHEKYGGDPQNPH) is disordered.

This sequence belongs to the universal ribosomal protein uL30 family. In terms of assembly, component of the mitochondrial ribosome large subunit (39S) which comprises a 16S rRNA and about 50 distinct proteins.

It is found in the mitochondrion. This is Large ribosomal subunit protein uL30m (Mrpl30) from Rattus norvegicus (Rat).